We begin with the raw amino-acid sequence, 204 residues long: Urease accessory protein UreG (204 aa).

GTP is bound at residue 12 to 19; that stretch reads GPVGSGKT.

The protein belongs to the SIMIBI class G3E GTPase family. UreG subfamily. Homodimer. UreD, UreF and UreG form a complex that acts as a GTP-hydrolysis-dependent molecular chaperone, activating the urease apoprotein by helping to assemble the nickel containing metallocenter of UreC. The UreE protein probably delivers the nickel.

It is found in the cytoplasm. Its function is as follows. Facilitates the functional incorporation of the urease nickel metallocenter. This process requires GTP hydrolysis, probably effectuated by UreG. The chain is Urease accessory protein UreG from Streptococcus salivarius (strain 57.I).